The following is a 396-amino-acid chain: Capsular polysaccharide biosynthesis protein CapF (396 aa).

Helical transmembrane passes span 7–27, 41–61, 74–94, 101–121, 129–149, 153–173, 198–218, 232–252, 279–299, 315–335, 351–371, and 372–392; these read YMFVANILSALCKFLILLVIV, ALVITAPIFLFISLKIRSVIV, AILSLNIITLIFVAIFVYVLG, ILIVSLIKLFENIKEVPYGIY, LLGISMGIYNILSLILFYIIY, HNLNMALLFLVISCIFSFAII, IFILTIPLAFSSALGSLNTGI, LGIFSTIAYVLVIGGLFANSI, MVFIGIFIGMCSVILSLFLGE, IILIILSFGLLFILSGIFLGT, LILLFCILIFSFLLIPKYSLL, and GAALTITISQFVALISYYYFY.

This sequence belongs to the polysaccharide synthase family.

The protein localises to the cell membrane. It functions in the pathway capsule biogenesis; capsule polysaccharide biosynthesis. Its function is as follows. Required for the biosynthesis of type 1 capsular polysaccharide. In Staphylococcus aureus, this protein is Capsular polysaccharide biosynthesis protein CapF (capF).